A 239-amino-acid polypeptide reads, in one-letter code: SKA complex subunit 1 (239 aa).

Residues 87–115 (PDSVPQKSTRPCLDDEKEGSSVVQPPESG) form a disordered region. The interval 116–239 (NRHVQLISEQ…RCGPLTFYYA (124 aa)) is microtubule binding.

Belongs to the SKA1 family. As to quaternary structure, component of the SKA complex, composed of two copies of ska-1 and a single copy of ska-3. The core complex associates with microtubules and may form dimeric assemblies. Interacts with ska-3 and microtubules.

The protein resides in the cytoplasm. It localises to the cytoskeleton. It is found in the spindle. The protein localises to the chromosome. Its subcellular location is the centromere. The protein resides in the kinetochore. Component of the SKA complex, a microtubule plus end-binding complex of the outer kinetochore that stabilizes spindle microtubule-kinetochore attachments, promotes alignment of chromosomes at the mitotic spindle equator (chromosome congression) and assists suppression of the spindle assembly checkpoint. Kinetochores, consisting of a centromere-associated inner segment and a microtubule-contacting outer segment, play a crucial role in chromosome segregation by mediating the physical connection between centromeric DNA and spindle microtubules. The outer kinetochore is made up of the ten-subunit KMN network complex, comprising the MIS12, NDC80 and KNL1 complexes, and auxiliary microtubule-associated components such as the SKA complex; together they connect the outer kinetochore with the inner kinetochore, bind microtubules, and mediate interactions with mitotic checkpoint proteins that delay anaphase until chromosomes are bioriented on the spindle. The SKA complex is loaded onto bioriented kinetochores and it facilitates chromosome congression by stabilizing microtubules and end-on attachment of the NDC80 complex to depolymerizing spindle microtubules, thereby assisting the poleward-moving kinetochore in withstanding microtubule pulling forces. The complex associates with dynamic microtubule plus-ends and can track both depolymerizing and elongating microtubules. The complex recruits protein phosphatase 1 (PP1) to the kinetochore in prometaphase and metaphase, to oppose spindle assembly checkpoint signaling and promote the onset of anaphase. In the complex, it mediates interactions with microtubules. During meiosis the SKA complex stabilizes the meiotic spindle and is required for its migration to the cortex. In Caenorhabditis briggsae, this protein is SKA complex subunit 1.